Here is a 219-residue protein sequence, read N- to C-terminus: Tetratricopeptide repeat protein 9A (219 aa).

The disordered stretch occupies residues 1–49; the sequence is MERKGLAARSSGNPSPPALGEGPRPVPPPCVPSGGGAPERGQAGTAAEP. Residues 56–89 form a TPR 1 repeat; it reads AHEFKSQGAQCYKDKKFREAIGKYHRALLELKGL. Residues 94 to 115 are disordered; sequence EERDARPASSAGVPKSSRLSEE. Ser-102 bears the Phosphoserine mark. 2 TPR repeats span residues 125–160 and 161–194; these read IDCYNSLAACLLQAELVNYERVKEYCLKVLKKEGEN and FKALYRSGVAFYHLGDYDKALYYLKEARTRQPTD.

This sequence belongs to the TTC9 family.

The sequence is that of Tetratricopeptide repeat protein 9A (Ttc9) from Mus musculus (Mouse).